A 219-amino-acid polypeptide reads, in one-letter code: Exosomal polycystin-1-interacting protein (219 aa).

An N-terminal signal peptide occupies residues 1–19; the sequence is MAPPSRHCLLLISTLGVFA. N-linked (GlcNAc...) asparagine glycans are attached at residues N29, N42, N95, N188, and N210.

It belongs to the EPCIP family. In terms of assembly, homooligomer. Interacts with PKD1 (via the PKD repeats in the N-terminal extracellular region); the interaction is not dependent on N-glycosylation of either protein. Post-translationally, N-glycosylated. Detected in the kidney and in the endothelium of large blood vessels (at protein level).

The protein localises to the vesicle. Its subcellular location is the secreted. The protein resides in the extracellular exosome. Likely to be involved with PKD1 in the detection, sequestration and exocytosis of senescent mitochondria. This is Exosomal polycystin-1-interacting protein from Homo sapiens (Human).